The following is a 210-amino-acid chain: Selenoprotein T2 (210 aa).

The N-terminal stretch at 1 to 21 (MAEYSQTGILTALLLFTVVTV) is a signal peptide. Residues 62 to 65 (CISU) constitute a cross-link (cysteinyl-selenocysteine (Cys-Sec)). A non-standard amino acid (selenocysteine) is located at residue selenocysteine 65.

It belongs to the SelWTH family. Selenoprotein T subfamily. In terms of processing, may contain a selenide-sulfide bond between Cys-62 and Sec-65. This bond is speculated to serve as redox-active pair. Widely expressed in the embryo.

The polypeptide is Selenoprotein T2 (Danio rerio (Zebrafish)).